A 65-amino-acid polypeptide reads, in one-letter code: Alpha-toxin OD1 (65 aa).

Residues 3–65 form the LCN-type CS-alpha/beta domain; it reads RDAYIADDKN…VPIRIPGKCR (63 aa). An Important for toxin selectivity for individual Nav channel subtype (Nav1.6/SCN8A and Nav1.7/SCN9A), but not for toxin potency motif is present at residues 9–11; it reads DDK. Disulfide bonds link Cys13–Cys64, Cys17–Cys37, Cys23–Cys47, and Cys27–Cys49. Arg65 carries the post-translational modification Arginine amide.

It belongs to the long (4 C-C) scorpion toxin superfamily. Sodium channel inhibitor family. Alpha subfamily. Expressed by the venom gland.

The protein localises to the secreted. Its function is as follows. Alpha toxins bind voltage-independently at site-3 of sodium channels and inhibit the inactivation of the activated channels. The toxin affect mammalian sodium channels Nav1.7/SCN9A (EC(50)=4.5 nM), Nav1.4/SCN4A (EC(50)=9.6 nM), Nav1.6/SCN8A (EC(50)=30 nM), Nav1.5/SCN5A (only at micromolar concentrations), and insect sodium channel para/tipE (EC(50)=80 nM). In vivo, intraplantar administration of this toxin elicits pain behaviors, including licking and flinching of the hind paw. This Odontobuthus doriae (Yellow Iranian scorpion) protein is Alpha-toxin OD1.